Reading from the N-terminus, the 384-residue chain is Surfeit locus protein 1-like (384 aa).

A run of 3 helical transmembrane segments spans residues 55 to 75 (ALLW…YKFL), 302 to 322 (IPLD…TCFI), and 338 to 358 (IGVE…TKIY).

Belongs to the SURF1 (TC 3.D.4.8) family.

The protein resides in the mitochondrion inner membrane. In terms of biological role, may be involved in the biogenesis of the COX complex. This chain is Surfeit locus protein 1-like, found in Arabidopsis thaliana (Mouse-ear cress).